The sequence spans 156 residues: Nucleosome assembly protein 1-like 5 (156 aa).

The segment covering 1–16 (MADPEKQGPAESRAED) has biased composition (basic and acidic residues). The disordered stretch occupies residues 1-58 (MADPEKQGPAESRAEDEVMEGAQGGEDAATGDSAAAPAAEEPQAPAENAPKPKKDFME). The span at 34-49 (AAAPAAEEPQAPAENA) shows a compositional bias: low complexity. Residues 68–94 (VLALKKLQKRCDKIEAKFDKEFQALEK) are a coiled coil. The tract at residues 120 to 156 (TLEGEDDEDDEEEDDEEEEEEEEAAAGATGGPNFAKK) is disordered. Residues 122-143 (EGEDDEDDEEEDDEEEEEEEEA) are compositionally biased toward acidic residues.

It belongs to the nucleosome assembly protein (NAP) family.

It localises to the nucleus. This is Nucleosome assembly protein 1-like 5 (Nap1l5) from Mus musculus (Mouse).